We begin with the raw amino-acid sequence, 442 residues long: Proline--tRNA ligase (442 aa).

The protein belongs to the class-II aminoacyl-tRNA synthetase family. ProS type 2 subfamily. Homodimer.

Its subcellular location is the cytoplasm. The catalysed reaction is tRNA(Pro) + L-proline + ATP = L-prolyl-tRNA(Pro) + AMP + diphosphate. Functionally, catalyzes the attachment of proline to tRNA(Pro) in a two-step reaction: proline is first activated by ATP to form Pro-AMP and then transferred to the acceptor end of tRNA(Pro). The sequence is that of Proline--tRNA ligase from Sinorhizobium medicae (strain WSM419) (Ensifer medicae).